The primary structure comprises 79 residues: D-alanyl carrier protein (79 aa).

Residues 1–77 (MDVKETILNI…KIISGVVELM (77 aa)) form the Carrier domain. Position 35 is an O-(pantetheine 4'-phosphoryl)serine (Ser-35).

It belongs to the DltC family. 4'-phosphopantetheine is transferred from CoA to a specific serine of apo-DCP.

It is found in the cytoplasm. The protein operates within cell wall biogenesis; lipoteichoic acid biosynthesis. Carrier protein involved in the D-alanylation of lipoteichoic acid (LTA). The loading of thioester-linked D-alanine onto DltC is catalyzed by D-alanine--D-alanyl carrier protein ligase DltA. The DltC-carried D-alanyl group is further transferred to cell membrane phosphatidylglycerol (PG) by forming an ester bond, probably catalyzed by DltD. D-alanylation of LTA plays an important role in modulating the properties of the cell wall in Gram-positive bacteria, influencing the net charge of the cell wall. The protein is D-alanyl carrier protein of Streptococcus suis (strain 98HAH33).